An 88-amino-acid polypeptide reads, in one-letter code: Small ribosomal subunit protein uS15c (88 aa).

Belongs to the universal ribosomal protein uS15 family. In terms of assembly, part of the 30S ribosomal subunit.

The protein resides in the plastid. It is found in the chloroplast. In Lobularia maritima (Sweet alyssum), this protein is Small ribosomal subunit protein uS15c (rps15).